Consider the following 615-residue polypeptide: NEDD8 ultimate buster 1 (615 aa).

2 coiled-coil regions span residues 36-70 (LALKDLAKQYSDRLECCENEVEKVIEEIRCKAIER) and 152-203 (KAMV…AAET). 3 consecutive UBA domains span residues 374 to 413 (YIDPSKVDNLLQLGFTAQEARLGLRACDGNVDHAATHITN), 424 to 470 (EEKE…LLSN), and 489 to 529 (SPSQ…LAHN). Positions 414–431 (RREELAQIRKEEKEKKRR) match the Nuclear localization signal motif. Positions 427–474 (EKKRRRLENIRFLKGMGYSTHAAQQVLHAASGNLDEALKILLSNPQMW) are NEDD8-binding 1. A disordered region spans residues 532–586 (SLPPELPLSPEDSLSPPATSPSDSAGTSSASTDEDMETEAVNEILEDIPEHEEDY). Positions 539 to 562 (LSPEDSLSPPATSPSDSAGTSSAS) are enriched in low complexity. An NEDD8-binding 2 region spans residues 550-598 (TSPSDSAGTSSASTDEDMETEAVNEILEDIPEHEEDYLDSTLEDEEIII). Positions 563–586 (TDEDMETEAVNEILEDIPEHEEDY) are enriched in acidic residues.

In terms of assembly, directly interacts with NEDD8 and PSMD4/S5a, a member of the regulatory subunit of the 26S proteasome. Isoform 1 binds to NEDD8 more efficiently than isoform 2. Interacts with AIPL1. The interaction with UBD via UBA domains facilitates the linking of UBD-conjugated target protein to the proteasome complex and accelerates UBD degradation and that of its conjugates. As to expression, widely expressed with lowest expression in the pancreas for isoform 1 and in leukocytes, liver, prostate and skeletal muscle for isoform 2.

The protein localises to the nucleus. Its function is as follows. Specific down-regulator of the NEDD8 conjugation system. Recruits NEDD8, UBD, and their conjugates to the proteasome for degradation. Isoform 1 promotes the degradation of NEDD8 more efficiently than isoform 2. The protein is NEDD8 ultimate buster 1 (NUB1) of Homo sapiens (Human).